The chain runs to 124 residues: U-scoloptoxin-Er5d (124 aa).

A signal peptide spans 1–22; that stretch reads MKTNCEFPLLCLLIVLVANVEG. A propeptide spanning residues 23–94 is cleaved from the precursor; sequence EVEDNELKMV…KRLWRNWERR (72 aa). 3 RLWRNWE repeats span residues 34 to 40, 61 to 67, and 86 to 92; these read RLWRNWE. Gln-95 carries the pyrrolidone carboxylic acid modification. The RLWRNWE 4; approximate repeat unit spans residues 107–113; it reads ELWRNWE. Residues 112 to 124 constitute a propeptide that is removed on maturation; it reads WEDLKRRQVGRFE.

It belongs to the scoloptoxin-08 family. Expressed by the venom gland.

The protein localises to the secreted. In Ethmostigmus rubripes (Giant centipede), this protein is U-scoloptoxin-Er5d.